Consider the following 403-residue polypeptide: Methylthioribose-1-phosphate isomerase (403 aa).

Catalysis depends on D280, which acts as the Proton donor.

It belongs to the eIF-2B alpha/beta/delta subunits family. MtnA subfamily.

It is found in the cytoplasm. It localises to the nucleus. It carries out the reaction 5-(methylsulfanyl)-alpha-D-ribose 1-phosphate = 5-(methylsulfanyl)-D-ribulose 1-phosphate. Its pathway is amino-acid biosynthesis; L-methionine biosynthesis via salvage pathway; L-methionine from S-methyl-5-thio-alpha-D-ribose 1-phosphate: step 1/6. Its function is as follows. Catalyzes the interconversion of methylthioribose-1-phosphate (MTR-1-P) into methylthioribulose-1-phosphate (MTRu-1-P). This Eremothecium gossypii (strain ATCC 10895 / CBS 109.51 / FGSC 9923 / NRRL Y-1056) (Yeast) protein is Methylthioribose-1-phosphate isomerase.